A 281-amino-acid chain; its full sequence is Diaminopimelate epimerase (281 aa).

Asn-13 and Asn-66 together coordinate substrate. Cys-75 (proton donor) is an active-site residue. Substrate is bound by residues 76 to 77 (GN), Asn-164, Asn-197, and 215 to 216 (ER). The active-site Proton acceptor is the Cys-224. 225–226 (GT) is a binding site for substrate.

It belongs to the diaminopimelate epimerase family. In terms of assembly, homodimer.

Its subcellular location is the cytoplasm. It carries out the reaction (2S,6S)-2,6-diaminopimelate = meso-2,6-diaminopimelate. The protein operates within amino-acid biosynthesis; L-lysine biosynthesis via DAP pathway; DL-2,6-diaminopimelate from LL-2,6-diaminopimelate: step 1/1. Its function is as follows. Catalyzes the stereoinversion of LL-2,6-diaminopimelate (L,L-DAP) to meso-diaminopimelate (meso-DAP), a precursor of L-lysine and an essential component of the bacterial peptidoglycan. This Rippkaea orientalis (strain PCC 8801 / RF-1) (Cyanothece sp. (strain PCC 8801)) protein is Diaminopimelate epimerase.